A 198-amino-acid chain; its full sequence is MNLIPTVIEQTNRGERAYDIYSRLLKDRIIMLGSAIDDNVANSIVSQLLFLEAEDPEKDISIYINSPGGSITAGMAIYDTMQFIKPKVSTICIGMAASMGAFLLAAGEKGKRYALPNSEVMIHQPLGGAQGQATEIEIAAKRILSLRDKLNQVLAERTGQPIEVIERDTDRDNFKTAEEALQYGLIDKVLTRNTEEQK.

The active-site Nucleophile is the serine 98. Histidine 123 is a catalytic residue.

Belongs to the peptidase S14 family. Fourteen ClpP subunits assemble into 2 heptameric rings which stack back to back to give a disk-like structure with a central cavity, resembling the structure of eukaryotic proteasomes.

It is found in the cytoplasm. It catalyses the reaction Hydrolysis of proteins to small peptides in the presence of ATP and magnesium. alpha-casein is the usual test substrate. In the absence of ATP, only oligopeptides shorter than five residues are hydrolyzed (such as succinyl-Leu-Tyr-|-NHMec, and Leu-Tyr-Leu-|-Tyr-Trp, in which cleavage of the -Tyr-|-Leu- and -Tyr-|-Trp bonds also occurs).. Its function is as follows. Cleaves peptides in various proteins in a process that requires ATP hydrolysis. Has a chymotrypsin-like activity. Plays a major role in the degradation of misfolded proteins. The chain is ATP-dependent Clp protease proteolytic subunit from Bacillus pumilus (strain SAFR-032).